The following is a 137-amino-acid chain: uncharacterized protein (137 aa).

Residues 1–10 (MISVDVPGHP) show a composition bias toward low complexity. The tract at residues 1-23 (MISVDVPGHPGDAGGGGGGARKV) is disordered. Positions 11–20 (GDAGGGGGGA) are enriched in gly residues.

This is an uncharacterized protein from Human adenovirus C serotype 2 (HAdV-2).